Consider the following 238-residue polypeptide: Probable 2-phosphosulfolactate phosphatase (238 aa).

Belongs to the ComB family. Requires Mg(2+) as cofactor.

The enzyme catalyses (2R)-O-phospho-3-sulfolactate + H2O = (2R)-3-sulfolactate + phosphate. The protein is Probable 2-phosphosulfolactate phosphatase of Clostridium botulinum (strain Alaska E43 / Type E3).